The primary structure comprises 478 residues: Methionine aminopeptidase 2 (478 aa).

The segment at 1 to 122 is disordered; that stretch reads MAGVEQAASF…TDPPSVPICD (122 aa). A2 carries the N-acetylalanine modification. Residues 36–46 show a composition bias toward basic residues; the sequence is KKKRRKKKKGK. Position 60 is a phosphoserine; alternate (S60). S60 carries an O-linked (GlcNAc) serine; alternate glycan. The segment covering 80–92 has biased composition (acidic residues); the sequence is ERDDDDEDGDGDA. The segment covering 97 to 109 has biased composition (basic residues); that stretch reads GKKKKKKKKKRGP. H231 provides a ligand contact to substrate. Residues D251, D262, and H331 each contribute to the a divalent metal cation site. H339 lines the substrate pocket. E364 and E459 together coordinate a divalent metal cation.

The protein belongs to the peptidase M24A family. Methionine aminopeptidase eukaryotic type 2 subfamily. As to quaternary structure, binds EIF2S1 at low magnesium concentrations. Interacts strongly with the eIF-2 gamma-subunit EIF2S3. Requires Co(2+) as cofactor. The cofactor is Zn(2+). Mn(2+) is required as a cofactor. It depends on Fe(2+) as a cofactor. Contains approximately 12 O-linked N-acetylglucosamine (GlcNAc) residues. O-glycosylation is required for EIF2S1 binding.

Its subcellular location is the cytoplasm. It catalyses the reaction Release of N-terminal amino acids, preferentially methionine, from peptides and arylamides.. Cotranslationally removes the N-terminal methionine from nascent proteins. The N-terminal methionine is often cleaved when the second residue in the primary sequence is small and uncharged (Met-Ala-, Cys, Gly, Pro, Ser, Thr, or Val). Its function is as follows. Protects eukaryotic initiation factor EIF2S1 from translation-inhibiting phosphorylation by inhibitory kinases such as EIF2AK2/PKR and EIF2AK1/HCR. Plays a critical role in the regulation of protein synthesis. This Mus musculus (Mouse) protein is Methionine aminopeptidase 2 (Metap2).